The primary structure comprises 174 residues: Sarcoplasmic calcium-binding protein (174 aa).

Ser-1 carries the post-translational modification N-acetylserine. EF-hand domains follow at residues 3-38 (LWVQKMKTYFNRIDFDKDGAITRMDFESMAERFAKE), 55-90 (GVWDNFLTAVAGGKGIDETTFINSMKEMVKNPEAKS), 91-126 (VVEGPLPLFFRAVDTNEDNNISRDEYGIFFGMLGLD), and 127-160 (KTMAPASFDAIDTNNDGLLSLEEFVIAGSDFFMN). Ca(2+)-binding residues include Asp-16, Asp-18, Asp-20, and Asp-27. Positions 104, 106, 108, 110, 115, 138, 140, 142, and 149 each coordinate Ca(2+).

Functionally, like parvalbumins, SCPs seem to be more abundant in fast contracting muscles, but no functional relationship can be established from this distribution. This is Sarcoplasmic calcium-binding protein from Hediste diversicolor (Sandworm).